Reading from the N-terminus, the 184-residue chain is Lipoprotein signal peptidase (184 aa).

3 helical membrane passes run 23–43 (FLYY…FQVF), 88–108 (PGLV…FLVF), and 110–130 (TSYN…GNFF). Active-site residues include D142 and D157. The helical transmembrane segment at 156–176 (ADCCITFSFIGLFLSFLIQFF) threads the bilayer.

Belongs to the peptidase A8 family.

The protein resides in the cell membrane. It carries out the reaction Release of signal peptides from bacterial membrane prolipoproteins. Hydrolyzes -Xaa-Yaa-Zaa-|-(S,diacylglyceryl)Cys-, in which Xaa is hydrophobic (preferably Leu), and Yaa (Ala or Ser) and Zaa (Gly or Ala) have small, neutral side chains.. The protein operates within protein modification; lipoprotein biosynthesis (signal peptide cleavage). Its function is as follows. This protein specifically catalyzes the removal of signal peptides from prolipoproteins. The protein is Lipoprotein signal peptidase of Mycoplasma pneumoniae (strain ATCC 29342 / M129 / Subtype 1) (Mycoplasmoides pneumoniae).